A 165-amino-acid polypeptide reads, in one-letter code: Probable chemoreceptor glutamine deamidase CheD (165 aa).

The protein belongs to the CheD family.

The enzyme catalyses L-glutaminyl-[protein] + H2O = L-glutamyl-[protein] + NH4(+). Its function is as follows. Probably deamidates glutamine residues to glutamate on methyl-accepting chemotaxis receptors (MCPs), playing an important role in chemotaxis. The sequence is that of Probable chemoreceptor glutamine deamidase CheD from Clostridium tetani (strain Massachusetts / E88).